A 411-amino-acid chain; its full sequence is Dual-specificity RNA methyltransferase RlmN (411 aa).

Glutamate 125 acts as the Proton acceptor in catalysis. Positions 131 to 380 (EEGRGTLCIS…IRTPRGRDIL (250 aa)) constitute a Radical SAM core domain. Cysteine 138 and cysteine 383 are disulfide-bonded. [4Fe-4S] cluster is bound by residues cysteine 145, cysteine 149, and cysteine 152. Residues 209–210 (GE), serine 241, 263–265 (SLH), and asparagine 340 each bind S-adenosyl-L-methionine. Residue cysteine 383 is the S-methylcysteine intermediate of the active site.

It belongs to the radical SAM superfamily. RlmN family. Requires [4Fe-4S] cluster as cofactor.

Its subcellular location is the cytoplasm. It catalyses the reaction adenosine(2503) in 23S rRNA + 2 reduced [2Fe-2S]-[ferredoxin] + 2 S-adenosyl-L-methionine = 2-methyladenosine(2503) in 23S rRNA + 5'-deoxyadenosine + L-methionine + 2 oxidized [2Fe-2S]-[ferredoxin] + S-adenosyl-L-homocysteine. The enzyme catalyses adenosine(37) in tRNA + 2 reduced [2Fe-2S]-[ferredoxin] + 2 S-adenosyl-L-methionine = 2-methyladenosine(37) in tRNA + 5'-deoxyadenosine + L-methionine + 2 oxidized [2Fe-2S]-[ferredoxin] + S-adenosyl-L-homocysteine. Specifically methylates position 2 of adenine 2503 in 23S rRNA and position 2 of adenine 37 in tRNAs. m2A2503 modification seems to play a crucial role in the proofreading step occurring at the peptidyl transferase center and thus would serve to optimize ribosomal fidelity. This Brucella suis biovar 1 (strain 1330) protein is Dual-specificity RNA methyltransferase RlmN.